A 610-amino-acid chain; its full sequence is DNA mismatch repair protein MutL (610 aa).

It belongs to the DNA mismatch repair MutL/HexB family.

This protein is involved in the repair of mismatches in DNA. It is required for dam-dependent methyl-directed DNA mismatch repair. May act as a 'molecular matchmaker', a protein that promotes the formation of a stable complex between two or more DNA-binding proteins in an ATP-dependent manner without itself being part of a final effector complex. The chain is DNA mismatch repair protein MutL from Rickettsia peacockii (strain Rustic).